Here is a 613-residue protein sequence, read N- to C-terminus: Methionine--tRNA ligase (613 aa).

A 'HIGH' region motif is present at residues 15–25 (PYANGPRHIGH). Zn(2+) contacts are provided by C147, C150, C160, and C163. The 'KMSKS' region signature appears at 351-355 (KFSSS). S354 serves as a coordination point for ATP.

This sequence belongs to the class-I aminoacyl-tRNA synthetase family. MetG type 1 subfamily. In terms of assembly, monomer. Requires Zn(2+) as cofactor.

The protein localises to the cytoplasm. It carries out the reaction tRNA(Met) + L-methionine + ATP = L-methionyl-tRNA(Met) + AMP + diphosphate. In terms of biological role, is required not only for elongation of protein synthesis but also for the initiation of all mRNA translation through initiator tRNA(fMet) aminoacylation. This Corynebacterium efficiens (strain DSM 44549 / YS-314 / AJ 12310 / JCM 11189 / NBRC 100395) protein is Methionine--tRNA ligase.